Here is a 278-residue protein sequence, read N- to C-terminus: MRAPPSPRKSKSGHFFYLYFRLCQLFSGRKLKRRWHVHKLHIHQYNTRWNLSPLSEIHIEDMINEPSGLCPGSSKKKPLLIARFPKGCQESPRVYVLQRNNLSRLKLSKRKYALRFYHNEIFGNNLKRKDGSIHKVEHQQCAETVRKIKKVTANHADVKIIFHDKNTIRSDKLGGRSNKMQTRPSVLEEDVEEEVSSVYIRFCDDHSLRVKDYHSLHRHSKKSSKEKRNNQEIGKSKLLGKLFEEETSRQNKGVEKKLDTIVIQKFQNYPIVSFSRVI.

The protein localises to the spore wall. May be involved in a late step of spore wall assembly. The protein is Outer spore wall protein 1 (OSW1) of Saccharomyces cerevisiae (strain ATCC 204508 / S288c) (Baker's yeast).